Reading from the N-terminus, the 267-residue chain is Undecaprenyl-diphosphatase (267 aa).

Helical transmembrane passes span 1–21, 39–59, 83–103, 111–131, 144–164, 189–209, 218–238, and 246–266; these read MSYFEAFVLALIQGLTEFLPI, QGLAFDVAVHVGTLAAVVIYF, AKLAWMIVIATIPACIFGLVM, LRSAYVIATTTIIFGLLLWWV, AGWKKALFIGIAQALAMIPGT, FLMSIPIITLAGSYLGLKLVT, FLLTGIVTSFISAYLCIHLFL, and MTPFVIYRLILGVGLFAYLLM.

The protein belongs to the UppP family.

The protein localises to the cell inner membrane. It catalyses the reaction di-trans,octa-cis-undecaprenyl diphosphate + H2O = di-trans,octa-cis-undecaprenyl phosphate + phosphate + H(+). Functionally, catalyzes the dephosphorylation of undecaprenyl diphosphate (UPP). Confers resistance to bacitracin. This chain is Undecaprenyl-diphosphatase, found in Vibrio vulnificus (strain CMCP6).